Consider the following 98-residue polypeptide: MTKSELIERIVTHQGLLSSKDVELAIKTMLEQMSQCLATGDRIEIRGFGSFSLHYRAPRVGRNPKTGQSVSLDGKFVPHFKPGKELRDRVNEDEEEGF.

Belongs to the bacterial histone-like protein family. In terms of assembly, heterodimer of an alpha and a beta chain.

In terms of biological role, this protein is one of the two subunits of integration host factor, a specific DNA-binding protein that functions in genetic recombination as well as in transcriptional and translational control. The chain is Integration host factor subunit beta from Pseudomonas syringae pv. tomato (strain ATCC BAA-871 / DC3000).